Here is a 535-residue protein sequence, read N- to C-terminus: Interferon lambda receptor 1 (535 aa).

Residues 1-20 form the signal peptide; the sequence is MWRADRWAPLLLFLLQSALG. At 21–227 the chain is on the extracellular side; sequence RPRLAPPRNV…FLEAPGDKRA (207 aa). The 96-residue stretch at 26–121 folds into the Fibronectin type-III domain; the sequence is PPRNVTLFSQ…ESRYLEYLFD (96 aa). N-linked (GlcNAc...) asparagine glycans are attached at residues Asn-29, Asn-36, and Asn-52. 3 disulfides stabilise this stretch: Cys-73–Cys-81, Cys-85–Cys-149, and Cys-194–Cys-216. Residue Asn-141 is glycosylated (N-linked (GlcNAc...) asparagine). The helical transmembrane segment at 228 to 248 threads the bilayer; it reads VLAMPSLLLLLIAAVAAGVAW. At 249-535 the chain is on the cytoplasmic side; sequence KIMKGNPWFQ…GRMLGDYLVR (287 aa). 2 disordered regions span residues 301 to 419 and 478 to 520; these read NRPA…APCG and VNNP…SSVQ. Acidic residues predominate over residues 321–336; that stretch reads STEDEDEDTDYDDDGD. Residues 350 to 360 show a composition bias toward basic and acidic residues; that stretch reads EKPRVMEHSET. The span at 376–396 shows a compositional bias: low complexity; the sequence is GSDGSSAWDSSDRSWSSTGDS. The span at 397-414 shows a compositional bias: basic and acidic residues; the sequence is SYKDEVGSSSCLDRKEPD. Residues 482–503 are compositionally biased toward acidic residues; that stretch reads EGEEEQEDEEEEEEEEEEEDWE.

It belongs to the type II cytokine receptor family. As to quaternary structure, heterodimer with IL10RB. In terms of processing, ubiquitinated by FBXO45-containing E3 ligase leading to proteasomal degradation.

It is found in the membrane. In terms of biological role, the IFNLR1/IL10RB dimer is a receptor for the cytokine ligands IFNL2 and IFNL3 and mediates their antiviral activity. The ligand/receptor complex stimulate the activation of the JAK/STAT signaling pathway leading to the expression of IFN-stimulated genes (ISG), which contribute to the antiviral state. Determines the cell type specificity of the lambda interferon action. Shows a more restricted pattern of expression in the epithelial tissues thereby limiting responses to lambda interferons primarily to epithelial cells of the respiratory, gastrointestinal, and reproductive tracts. Seems not to be essential for early virus-activated host defense in vaginal infection, but plays an important role in Toll-like receptor (TLR)-induced antiviral defense. Plays a significant role in the antiviral immune defense in the intestinal epithelium. This is Interferon lambda receptor 1 (Ifnlr1) from Mus musculus (Mouse).